Consider the following 368-residue polypeptide: 3-dehydroquinate synthase (368 aa).

Residues 69 to 74 (DGEAYK), 103 to 107 (GVIGD), 127 to 128 (TT), lysine 140, and lysine 149 contribute to the NAD(+) site. Residues glutamate 182, histidine 245, and histidine 262 each contribute to the Zn(2+) site.

This sequence belongs to the sugar phosphate cyclases superfamily. Dehydroquinate synthase family. Co(2+) is required as a cofactor. Zn(2+) serves as cofactor. Requires NAD(+) as cofactor.

It localises to the cytoplasm. It catalyses the reaction 7-phospho-2-dehydro-3-deoxy-D-arabino-heptonate = 3-dehydroquinate + phosphate. It functions in the pathway metabolic intermediate biosynthesis; chorismate biosynthesis; chorismate from D-erythrose 4-phosphate and phosphoenolpyruvate: step 2/7. In terms of biological role, catalyzes the conversion of 3-deoxy-D-arabino-heptulosonate 7-phosphate (DAHP) to dehydroquinate (DHQ). This chain is 3-dehydroquinate synthase, found in Pseudomonas aeruginosa (strain LESB58).